Reading from the N-terminus, the 290-residue chain is uncharacterized protein (290 aa).

The Schiff-base intermediate with substrate role is filled by K203.

It belongs to the DeoC/FbaB aldolase family.

This is an uncharacterized protein from Pasteurella multocida (strain Pm70).